We begin with the raw amino-acid sequence, 123 residues long: Cholecystokinin A (123 aa).

An N-terminal signal peptide occupies residues 1–20 (MYSGICICLLLAMLSASSKA). Residues 21-103 (HQSEDAVVTE…FDQPHRINDR (83 aa)) constitute a propeptide that is removed on maturation. Tyr105 carries the sulfotyrosine modification. Position 111 is a phenylalanine amide (Phe111). Residues 115–123 (SAEEYEYSS) constitute a propeptide that is removed on maturation.

This sequence belongs to the gastrin/cholecystokinin family. Post-translationally, the precursor is cleaved by proteases to produce a number of active cholecystokinins. Brain, gastrointestinal tract and lung.

It localises to the secreted. This Xenopus laevis (African clawed frog) protein is Cholecystokinin A (cck-a).